The sequence spans 180 residues: Ribosome-recycling factor (180 aa).

The tract at residues 135–156 (SDLKKDNDLSEDSRHRTEDDIQ) is disordered.

This sequence belongs to the RRF family.

Its subcellular location is the cytoplasm. Functionally, responsible for the release of ribosomes from messenger RNA at the termination of protein biosynthesis. May increase the efficiency of translation by recycling ribosomes from one round of translation to another. The chain is Ribosome-recycling factor from Oenococcus oeni (strain ATCC BAA-331 / PSU-1).